The primary structure comprises 380 residues: Chaperone protein DnaJ 2 (380 aa).

The region spanning aspartate 10 to arginine 75 is the J domain. Over residues lysine 32–serine 56 the composition is skewed to basic and acidic residues. Positions lysine 32–serine 63 are disordered. Residues glycine 151–threonine 230 form a CR-type zinc finger. Zn(2+) is bound by residues cysteine 164, cysteine 167, cysteine 181, cysteine 184, cysteine 204, cysteine 207, cysteine 218, and cysteine 221. CXXCXGXG motif repeat units lie at residues cysteine 164 to glycine 171, cysteine 181 to glycine 188, cysteine 204 to glycine 211, and cysteine 218 to glycine 225.

This sequence belongs to the DnaJ family. Homodimer. Zn(2+) serves as cofactor.

It is found in the cytoplasm. In terms of biological role, participates actively in the response to hyperosmotic and heat shock by preventing the aggregation of stress-denatured proteins and by disaggregating proteins, also in an autonomous, DnaK-independent fashion. Unfolded proteins bind initially to DnaJ; upon interaction with the DnaJ-bound protein, DnaK hydrolyzes its bound ATP, resulting in the formation of a stable complex. GrpE releases ADP from DnaK; ATP binding to DnaK triggers the release of the substrate protein, thus completing the reaction cycle. Several rounds of ATP-dependent interactions between DnaJ, DnaK and GrpE are required for fully efficient folding. Also involved, together with DnaK and GrpE, in the DNA replication of plasmids through activation of initiation proteins. In Cutibacterium acnes (strain DSM 16379 / KPA171202) (Propionibacterium acnes), this protein is Chaperone protein DnaJ 2.